Here is a 212-residue protein sequence, read N- to C-terminus: Thymidine kinase (212 aa).

ATP contacts are provided by residues 11 to 18 (SPMNAGKT), 43 to 45 (DTR), and 86 to 89 (DEAQ). Glu-87 serves as the catalytic Proton acceptor. Phe-119 is a binding site for substrate. Residues Cys-144, Cys-147, Cys-183, and Cys-186 each contribute to the Zn(2+) site.

The protein belongs to the thymidine kinase family.

It carries out the reaction thymidine + ATP = dTMP + ADP + H(+). The chain is Thymidine kinase (TK) from Encephalitozoon cuniculi (strain GB-M1) (Microsporidian parasite).